A 565-amino-acid polypeptide reads, in one-letter code: uncharacterized protein (565 aa).

The next 10 helical transmembrane spans lie at 28–48, 73–93, 109–129, 169–189, 262–282, 315–335, 364–384, 393–413, 461–481, and 526–546; these read IFHF…LPFA, ASYG…DTGL, VLAI…FLVW, LFLF…FYFI, IVIQ…YPVL, LIVT…VITS, SLIF…FGVI, VFPW…AMFI, AFLV…LLPL, and TLGL…LTFV.

The protein belongs to the TrkH potassium transport family.

It localises to the cell membrane. This is an uncharacterized protein from Mycoplasma pneumoniae (strain ATCC 29342 / M129 / Subtype 1) (Mycoplasmoides pneumoniae).